Here is a 751-residue protein sequence, read N- to C-terminus: Fusarisetin A cluster transcription factor fsa6 (751 aa).

The tract at residues 1–35 (MADQAQDVRPTEWGPGKTPQGRARLPSSRPREKPQ) is disordered. Positions 38-66 (CNLCRRRKLRCDRQRPCSSCAQRELGLSC) form a DNA-binding region, zn(2)-C6 fungal-type. Positions 107–116 (NVNAQDQVGA) are enriched in polar residues. Residues 107–153 (NVNAQDQVGATPSPRGQPRGPDYPTPAAVHAPSTNEEPVSAAVSPAD) form a disordered region.

Its subcellular location is the nucleus. Its function is as follows. Transcription factor that regulates the expression of the gene cluster that mediates the biosynthesis of fusarisetin A. The polypeptide is Fusarisetin A cluster transcription factor fsa6 (Fusarium sp. (strain FN080326)).